The sequence spans 100 residues: Urease subunit gamma (100 aa).

This sequence belongs to the urease gamma subunit family. As to quaternary structure, heterotrimer of UreA (gamma), UreB (beta) and UreC (alpha) subunits. Three heterotrimers associate to form the active enzyme.

The protein resides in the cytoplasm. The enzyme catalyses urea + 2 H2O + H(+) = hydrogencarbonate + 2 NH4(+). Its pathway is nitrogen metabolism; urea degradation; CO(2) and NH(3) from urea (urease route): step 1/1. In Roseobacter denitrificans (strain ATCC 33942 / OCh 114) (Erythrobacter sp. (strain OCh 114)), this protein is Urease subunit gamma.